A 207-amino-acid polypeptide reads, in one-letter code: Thymidine kinase (207 aa).

Residues 15 to 22 (GCMFSGKS) and 88 to 91 (DEIQ) contribute to the ATP site. E89 (proton acceptor) is an active-site residue. C145, C148, C183, and H186 together coordinate Zn(2+). The segment covering 184 to 198 (RHHHEVPGKPKKRYN) has biased composition (basic residues). The tract at residues 184 to 207 (RHHHEVPGKPKKRYNHPLAGHTGE) is disordered.

Belongs to the thymidine kinase family. Homotetramer.

Its subcellular location is the cytoplasm. It catalyses the reaction thymidine + ATP = dTMP + ADP + H(+). This Geobacillus kaustophilus (strain HTA426) protein is Thymidine kinase.